The sequence spans 387 residues: EARP and GARP complex-interacting protein 1 (387 aa).

An N-acetylmethionine modification is found at methionine 1. WD repeat units lie at residues 132 to 172, 180 to 222, 226 to 266, and 270 to 310; these read TAHS…SQAV, GGKG…QIYC, AHGQ…EPVK, and EHSH…SEPF. A disordered region spans residues 310–334; sequence FGHLVDDDDISDQEDHRSEEKSKEP. At serine 320 the chain carries Phosphoserine. Positions 322–334 are enriched in basic and acidic residues; sequence QEDHRSEEKSKEP. Residues 345 to 385 form a WD 5 repeat; that stretch reads EHEDSVYAVDWSSADPWLFASLSYDGRLVINRVPRALKYHI.

It belongs to the WD repeat EIPR1 family. In terms of assembly, interacts with two multisubunit tethering complexes: EARP composed of VPS50, VPS51, VPS52 and VPS53 subunits and GARP complex composed of VPS51, VPS52, VPS53 and VPS54 subunits. Interacts with SNAP29.

The protein resides in the golgi apparatus. The protein localises to the trans-Golgi network. Functionally, acts as a component of endosomal retrieval machinery that is involved in protein transport from early endosomes to either recycling endosomes or the trans-Golgi network. Mediates the recruitment of Golgi-associated retrograde protein (GARP) complex to the trans-Golgi network and controls early endosome-to-Golgi transport of internalized protein. Promotes the recycling of internalized transferrin receptor (TFRC) to the plasma membrane through interaction with endosome-associated recycling protein (EARP) complex. Controls proper insulin distribution and secretion, and retention of cargo in mature dense core vesicles. Required for the stability of the endosome-associated retrograde protein (EARP) complex subunits and for proper localization and association of EARP with membranes. The protein is EARP and GARP complex-interacting protein 1 of Macaca fascicularis (Crab-eating macaque).